The primary structure comprises 260 residues: Global transcriptional regulator CodY (260 aa).

The interval methionine 1 to leucine 159 is GAF domain. The H-T-H motif DNA-binding region spans alanine 207–arginine 226.

Belongs to the CodY family.

It localises to the cytoplasm. Functionally, DNA-binding global transcriptional regulator which is involved in the adaptive response to starvation and acts by directly or indirectly controlling the expression of numerous genes in response to nutrient availability. During rapid exponential growth, CodY is highly active and represses genes whose products allow adaptation to nutrient depletion. In Streptococcus equi subsp. zooepidemicus (strain MGCS10565), this protein is Global transcriptional regulator CodY.